Here is a 157-residue protein sequence, read N- to C-terminus: Small ribosomal subunit protein uS7 (157 aa).

This sequence belongs to the universal ribosomal protein uS7 family. Part of the 30S ribosomal subunit. Contacts proteins S9 and S11.

One of the primary rRNA binding proteins, it binds directly to 16S rRNA where it nucleates assembly of the head domain of the 30S subunit. Is located at the subunit interface close to the decoding center, probably blocks exit of the E-site tRNA. The protein is Small ribosomal subunit protein uS7 of Caldicellulosiruptor saccharolyticus (strain ATCC 43494 / DSM 8903 / Tp8T 6331).